A 130-amino-acid polypeptide reads, in one-letter code: Small ribosomal subunit protein uS11 (130 aa).

The protein belongs to the universal ribosomal protein uS11 family. In terms of assembly, part of the 30S ribosomal subunit. Interacts with proteins S7 and S18. Binds to IF-3.

Functionally, located on the platform of the 30S subunit, it bridges several disparate RNA helices of the 16S rRNA. Forms part of the Shine-Dalgarno cleft in the 70S ribosome. The sequence is that of Small ribosomal subunit protein uS11 from Shewanella violacea (strain JCM 10179 / CIP 106290 / LMG 19151 / DSS12).